Here is a 145-residue protein sequence, read N- to C-terminus: Cystatin-like 1 (145 aa).

The first 19 residues, 1-19, serve as a signal peptide directing secretion; that stretch reads MGIGCWRNPLLLLIALVLS. Residues 37–115 enclose the Cystatin domain; sequence SKKNMNSTLN…KKLRKSLICE (79 aa). An N-linked (GlcNAc...) asparagine glycan is attached at Asn42. Intrachain disulfides connect Cys91-Cys101 and Cys114-Cys134.

This sequence belongs to the cystatin family.

It localises to the secreted. The polypeptide is Cystatin-like 1 (CSTL1) (Homo sapiens (Human)).